A 158-amino-acid polypeptide reads, in one-letter code: SsrA-binding protein (158 aa).

The protein belongs to the SmpB family.

It localises to the cytoplasm. Required for rescue of stalled ribosomes mediated by trans-translation. Binds to transfer-messenger RNA (tmRNA), required for stable association of tmRNA with ribosomes. tmRNA and SmpB together mimic tRNA shape, replacing the anticodon stem-loop with SmpB. tmRNA is encoded by the ssrA gene; the 2 termini fold to resemble tRNA(Ala) and it encodes a 'tag peptide', a short internal open reading frame. During trans-translation Ala-aminoacylated tmRNA acts like a tRNA, entering the A-site of stalled ribosomes, displacing the stalled mRNA. The ribosome then switches to translate the ORF on the tmRNA; the nascent peptide is terminated with the 'tag peptide' encoded by the tmRNA and targeted for degradation. The ribosome is freed to recommence translation, which seems to be the essential function of trans-translation. The protein is SsrA-binding protein of Symbiobacterium thermophilum (strain DSM 24528 / JCM 14929 / IAM 14863 / T).